The primary structure comprises 347 residues: Sensor protein VraS (347 aa).

The next 2 helical transmembrane spans lie at 13-33 (ILVY…VNII) and 43-63 (IFGI…CIIV). Residues 150 to 341 (RLARELHDSV…RIEVKAPLNK (192 aa)) enclose the Histidine kinase domain. Histidine 156 carries the post-translational modification Phosphohistidine.

In terms of processing, autophosphorylated on His-156.

The protein resides in the cell membrane. It carries out the reaction ATP + protein L-histidine = ADP + protein N-phospho-L-histidine.. In terms of biological role, member of the two-component regulatory system PprA/PprB involved in biofilm formation by controlling the expression of many related genes including type IVb pili major subunit flp pilin, adhesin bapA or cupE fimbriae. Also modulates quorum-sensing signal production acting on both negative and positive modulators. Functions as a heme sensor histidine kinase which is autophosphorylated at a histidine residue and transfers its phosphate group to PprB. The protein is Sensor protein VraS (vraS) of Staphylococcus aureus (strain COL).